The following is a 160-amino-acid chain: SsrA-binding protein (160 aa).

Belongs to the SmpB family.

It localises to the cytoplasm. Functionally, required for rescue of stalled ribosomes mediated by trans-translation. Binds to transfer-messenger RNA (tmRNA), required for stable association of tmRNA with ribosomes. tmRNA and SmpB together mimic tRNA shape, replacing the anticodon stem-loop with SmpB. tmRNA is encoded by the ssrA gene; the 2 termini fold to resemble tRNA(Ala) and it encodes a 'tag peptide', a short internal open reading frame. During trans-translation Ala-aminoacylated tmRNA acts like a tRNA, entering the A-site of stalled ribosomes, displacing the stalled mRNA. The ribosome then switches to translate the ORF on the tmRNA; the nascent peptide is terminated with the 'tag peptide' encoded by the tmRNA and targeted for degradation. The ribosome is freed to recommence translation, which seems to be the essential function of trans-translation. The polypeptide is SsrA-binding protein (Citrobacter koseri (strain ATCC BAA-895 / CDC 4225-83 / SGSC4696)).